Consider the following 1113-residue polypeptide: Atrial natriuretic peptide-converting enzyme (1113 aa).

The Cytoplasmic portion of the chain corresponds to Met-1 to Arg-112. A helical; Signal-anchor for type II membrane protein transmembrane segment spans residues Phe-113–Leu-133. Residues Ser-134 to Gly-1113 lie on the Extracellular side of the membrane. N-linked (GlcNAc...) asparagine glycosylation is found at Asn-147, Asn-202, and Asn-208. The tract at residues Ala-176–Asn-202 is disordered. The region spanning Arg-201–Leu-327 is the FZ 1 domain. Intrachain disulfides connect Cys-206/Cys-266, Cys-214/Cys-259, Cys-250/Cys-290, Cys-279/Cys-324, Cys-283/Cys-307, Cys-337/Cys-350, Cys-345/Cys-363, and Cys-357/Cys-372. N-linked (GlcNAc...) asparagine glycans are attached at residues Asn-298 and Asn-317. LDL-receptor class A domains are found at residues Leu-336 to Cys-372, Asn-373 to Cys-408, Asp-409 to Cys-445, and Ser-446 to Ser-483. Asn-373 is a glycosylation site (N-linked (GlcNAc...) asparagine). 9 disulfide bridges follow: Cys-374–Cys-386, Cys-381–Cys-399, Cys-393–Cys-408, Cys-410–Cys-423, Cys-418–Cys-436, Cys-430–Cys-445, Cys-447–Cys-460, Cys-455–Cys-473, and Cys-467–Cys-482. Asn-411 carries an N-linked (GlcNAc...) asparagine glycan. N-linked (GlcNAc...) asparagine glycosylation is present at Asn-444. Residues Asn-481, Asn-519, and Asn-537 are each glycosylated (N-linked (GlcNAc...) asparagine). An FZ 2 domain is found at Ser-518–Pro-641. 14 cysteine pairs are disulfide-bonded: Cys-523/Cys-586, Cys-531/Cys-579, Cys-570/Cys-608, Cys-597/Cys-638, Cys-601/Cys-625, Cys-648/Cys-660, Cys-655/Cys-673, Cys-667/Cys-682, Cys-684/Cys-698, Cys-692/Cys-711, Cys-705/Cys-720, Cys-723/Cys-735, Cys-730/Cys-748, and Cys-742/Cys-757. A glycan (N-linked (GlcNAc...) asparagine) is linked at Asn-635. 3 consecutive LDL-receptor class A domains span residues Glu-647–Cys-682, Gly-683–Ser-721, and Phe-722–Cys-757. Asn-719 carries an N-linked (GlcNAc...) asparagine glycan. The 96-residue stretch at Val-758–Ser-853 folds into the SRCR domain. N-linked (GlcNAc...) asparagine glycosylation is found at Asn-765 and Asn-828. Cystine bridges form between Cys-782-Cys-884, Cys-857-Cys-979, Cys-895-Cys-911, Cys-993-Cys-1058, Cys-1022-Cys-1037, and Cys-1048-Cys-1077. A Peptidase S1 domain is found at Ile-869 to Tyr-1102. Active-site charge relay system residues include His-910 and Asp-959. An N-linked (GlcNAc...) asparagine glycan is attached at Asn-970. The Charge relay system role is filled by Ser-1052. Asn-1089 carries N-linked (GlcNAc...) asparagine glycosylation.

The protein belongs to the peptidase S1 family. Post-translationally, N-glycosylated; required for processing and activation. In terms of processing, activated through proteolytic processing by a trypsin-like protease; cleaved into a N-terminal propeptide and an activated corin protease fragment. Atrial natriuretic peptide-converting enzyme, 180 kDa soluble fragment is produced by cleavage by ADAM10. Cleavage by ADAM10 to produce soluble 180 kDa soluble fragment takes place after the transmembrane region and before FZ 1. A disulfide bond links the activated corin protease fragment and the N-terminal propeptide. The disulfide bond also links the activated corin protease fragment with Atrial natriuretic peptide-converting enzyme, 180 kDa soluble fragment. In terms of tissue distribution, highly expressed in heart. Also expressed in pregnant uterus.

Its subcellular location is the cell membrane. It is found in the secreted. In terms of biological role, serine-type endopeptidase involved in atrial natriuretic peptide (NPPA) processing. Converts through proteolytic cleavage the non-functional propeptide NPPA into the active hormone, thereby regulating blood pressure in heart and promoting natriuresis, diuresis and vasodilation. Proteolytic cleavage of pro-NPPA also plays a role in female pregnancy by promoting trophoblast invasion and spiral artery remodeling in uterus. Also acts as a regulator of sodium reabsorption in kidney. May also process pro-NPPB the B-type natriuretic peptide. The protein is Atrial natriuretic peptide-converting enzyme (Corin) of Mus musculus (Mouse).